The sequence spans 113 residues: Protein FAM27E3 (113 aa).

The tract at residues 1–113 (MGIFQLLRDR…YTHRHTHRVL (113 aa)) is disordered. Basic and acidic residues predominate over residues 77–99 (QTDRERERNTQRLRDRERRENGR). Positions 100–113 (HTHTYTHRHTHRVL) are enriched in basic residues.

This sequence belongs to the FAM27 family.

This is Protein FAM27E3 (FAM27E3) from Homo sapiens (Human).